A 218-amino-acid polypeptide reads, in one-letter code: Zinc finger CCHC-type and RNA-binding motif-containing protein 1 (218 aa).

Residues 10 to 88 (STVYVSNLPF…RAIKASIAKD (79 aa)) form the RRM domain. The CCHC-type zinc-finger motif lies at 105-122 (SRCYECGDTGHLSYACPK). Positions 119–218 (ACPKNMLGER…YFSDEDELSD (100 aa)) are disordered. A coiled-coil region spans residues 132 to 188 (QKKEKKKRKRLVEEEEEEVVEEEESEDEGEDPALDSLSQAIAFQQARIDEEKNKYRH). Positions 144–164 (EEEEEEVVEEEESEDEGEDPA) are enriched in acidic residues. Positions 178–201 (RIDEEKNKYRHDPAEASTSEDSRR) are enriched in basic and acidic residues.

As to quaternary structure, component of the U11/U12 snRNPs that are part of the U12-type spliceosome.

The protein resides in the nucleus. In Xenopus laevis (African clawed frog), this protein is Zinc finger CCHC-type and RNA-binding motif-containing protein 1 (zcrb1).